Here is a 205-residue protein sequence, read N- to C-terminus: Recombination protein RecR (205 aa).

The C4-type zinc finger occupies 59 to 74 (CARCNTFCEGGLCDIC). The 96-residue stretch at 82-177 (RRLMVVHMPA…KVSRLSQGIP (96 aa)) folds into the Toprim domain.

This sequence belongs to the RecR family.

Functionally, may play a role in DNA repair. It seems to be involved in an RecBC-independent recombinational process of DNA repair. It may act with RecF and RecO. The protein is Recombination protein RecR of Neisseria meningitidis serogroup A / serotype 4A (strain DSM 15465 / Z2491).